The following is a 127-amino-acid chain: UPF0389 protein GA21628 (127 aa).

A helical membrane pass occupies residues 69–88; the sequence is IRLANIMIALTVIGCGIMVY.

This sequence belongs to the UPF0389 family.

The protein resides in the membrane. The sequence is that of UPF0389 protein GA21628 from Drosophila pseudoobscura pseudoobscura (Fruit fly).